Reading from the N-terminus, the 317-residue chain is Flagellar hook-associated protein 3 (317 aa).

This sequence belongs to the bacterial flagellin family.

The protein resides in the secreted. Its subcellular location is the bacterial flagellum. In Escherichia coli (strain K12), this protein is Flagellar hook-associated protein 3 (flgL).